The primary structure comprises 66 residues: Large ribosomal subunit protein bL33c (66 aa).

It belongs to the bacterial ribosomal protein bL33 family.

Its subcellular location is the plastid. The protein resides in the chloroplast. The protein is Large ribosomal subunit protein bL33c of Lobularia maritima (Sweet alyssum).